Here is a 48-residue protein sequence, read N- to C-terminus: Sperm protamine R3 isoform 1 (48 aa).

The segment covering 1–29 (ARRRHSMKKKRKSVRRRKTRKNQRKRKNS) has biased composition (basic residues). A disordered region spans residues 1–48 (ARRRHSMKKKRKSVRRRKTRKNQRKRKNSLGRSFKQHGFLKQPPRFRP).

As to expression, testis.

The protein localises to the nucleus. It is found in the chromosome. Protamines substitute for histones in the chromatin of sperm during the haploid phase of spermatogenesis. They compact sperm DNA into a highly condensed, stable and inactive complex. The sequence is that of Sperm protamine R3 isoform 1 from Hydrolagus colliei (Spotted ratfish).